A 307-amino-acid chain; its full sequence is Mitochondrial thiamine pyrophosphate carrier 1 (307 aa).

Solcar repeat units lie at residues 13–95 (VSTT…IGSF), 105–190 (SPQL…IKIF), and 203–305 (PFTL…FMNK). 6 consecutive transmembrane segments (helical) span residues 19 to 36 (LVAGSLSGLFARTCIAPL), 76 to 96 (IMYIIYGGAQFGSYTYIGSFL), 108 to 126 (LYSCLVGSLAGMTSSLASY), 160 to 184 (MGFFSGCGSSMINIGLNTAIMFGVY), 210 to 226 (LAGPISGFTSKLATFPL), and 280 to 297 (GVTMSLIKSVPSTAISLW).

Belongs to the mitochondrial carrier (TC 2.A.29) family.

It is found in the mitochondrion inner membrane. Mitochondrial transporter that mediates uptake of thiamine pyrophosphate (ThPP) into mitochondria. In Candida glabrata (strain ATCC 2001 / BCRC 20586 / JCM 3761 / NBRC 0622 / NRRL Y-65 / CBS 138) (Yeast), this protein is Mitochondrial thiamine pyrophosphate carrier 1 (TPC1).